Consider the following 516-residue polypeptide: Squalene epoxidase 5 (516 aa).

2 helical membrane passes run 3–23 (FTNV…VFYV) and 45–65 (ATDV…YALA). FAD contacts are provided by residues 55 to 56 (VG), 75 to 76 (ER), R83, F88, R156, V172, D335, and M348. A helical transmembrane segment spans residues 446–466 (LIYHLCAITLSSIGHLLSPFP).

The protein belongs to the squalene monooxygenase family. FAD serves as cofactor. Expressed in seedlings, leaves, stems and inflorescences. Detected in siliques.

Its subcellular location is the membrane. It carries out the reaction squalene + reduced [NADPH--hemoprotein reductase] + O2 = (S)-2,3-epoxysqualene + oxidized [NADPH--hemoprotein reductase] + H2O + H(+). It participates in terpene metabolism; lanosterol biosynthesis; lanosterol from farnesyl diphosphate: step 2/3. In terms of biological role, catalyzes the stereospecific oxidation of squalene to (S)-2,3-epoxysqualene, and is considered to be a rate-limiting enzyme in steroid biosynthesis. The protein is Squalene epoxidase 5 (SQE5) of Arabidopsis thaliana (Mouse-ear cress).